A 147-amino-acid chain; its full sequence is Large ribosomal subunit protein uL22 (147 aa).

The tract at residues 110–147 (EEKKTVAKKAPAAKKTTTTKAPAKKTTSTKKATAKKES) is disordered. Residues 117-140 (KKAPAAKKTTTTKAPAKKTTSTKK) show a composition bias toward low complexity.

The protein belongs to the universal ribosomal protein uL22 family. As to quaternary structure, part of the 50S ribosomal subunit.

Its function is as follows. This protein binds specifically to 23S rRNA; its binding is stimulated by other ribosomal proteins, e.g. L4, L17, and L20. It is important during the early stages of 50S assembly. It makes multiple contacts with different domains of the 23S rRNA in the assembled 50S subunit and ribosome. In terms of biological role, the globular domain of the protein is located near the polypeptide exit tunnel on the outside of the subunit, while an extended beta-hairpin is found that lines the wall of the exit tunnel in the center of the 70S ribosome. The chain is Large ribosomal subunit protein uL22 from Campylobacter jejuni subsp. jejuni serotype O:23/36 (strain 81-176).